Here is a 445-residue protein sequence, read N- to C-terminus: Phosphoglucosamine mutase (445 aa).

The active-site Phosphoserine intermediate is serine 99. 4 residues coordinate Mg(2+): serine 99, aspartate 242, aspartate 244, and aspartate 246. A Phosphoserine modification is found at serine 99.

The protein belongs to the phosphohexose mutase family. Requires Mg(2+) as cofactor. In terms of processing, activated by phosphorylation.

The catalysed reaction is alpha-D-glucosamine 1-phosphate = D-glucosamine 6-phosphate. Its function is as follows. Catalyzes the conversion of glucosamine-6-phosphate to glucosamine-1-phosphate. The polypeptide is Phosphoglucosamine mutase (Helicobacter pylori (strain HPAG1)).